We begin with the raw amino-acid sequence, 147 residues long: UPF0306 protein YhbP (147 aa).

Belongs to the UPF0306 family.

In Salmonella agona (strain SL483), this protein is UPF0306 protein YhbP.